Here is a 236-residue protein sequence, read N- to C-terminus: MSKEELKRAAAARALEYVSDGMQLGLGTGSTAKHFVELLGERVRAGLRVVGVPTSEGTRADAERCGVPLTTLDDVDHLDLTVDGADEIAPSLDVIKGGGGALLREKIVAAASTRMVVISDDSKWVETLGRFPLPVEVIPFGLGATRRALATAFAEAGVTGEITLRQGPDGHAFVTDGGHWILDAHLGRIPEPPRLAALLSAIPGVVEHGLFIGLAKTAILAGSQGIRIVDRPRGRV.

Residues 28 to 31, 83 to 86, and 96 to 99 each bind substrate; these read TGST, DGAD, and KGGG. Glu105 functions as the Proton acceptor in the catalytic mechanism. Residue Lys123 participates in substrate binding.

The protein belongs to the ribose 5-phosphate isomerase family. As to quaternary structure, homodimer.

It carries out the reaction aldehydo-D-ribose 5-phosphate = D-ribulose 5-phosphate. Its pathway is carbohydrate degradation; pentose phosphate pathway; D-ribose 5-phosphate from D-ribulose 5-phosphate (non-oxidative stage): step 1/1. Catalyzes the reversible conversion of ribose-5-phosphate to ribulose 5-phosphate. This chain is Ribose-5-phosphate isomerase A, found in Afipia carboxidovorans (strain ATCC 49405 / DSM 1227 / KCTC 32145 / OM5) (Oligotropha carboxidovorans).